The following is a 269-amino-acid chain: Tryptophan synthase alpha chain (269 aa).

Active-site proton acceptor residues include Glu-50 and Asp-61.

The protein belongs to the TrpA family. Tetramer of two alpha and two beta chains.

The catalysed reaction is (1S,2R)-1-C-(indol-3-yl)glycerol 3-phosphate + L-serine = D-glyceraldehyde 3-phosphate + L-tryptophan + H2O. It participates in amino-acid biosynthesis; L-tryptophan biosynthesis; L-tryptophan from chorismate: step 5/5. The alpha subunit is responsible for the aldol cleavage of indoleglycerol phosphate to indole and glyceraldehyde 3-phosphate. This chain is Tryptophan synthase alpha chain, found in Buchnera aphidicola subsp. Baizongia pistaciae (strain Bp).